Here is a 347-residue protein sequence, read N- to C-terminus: Aspartate-semialdehyde dehydrogenase (347 aa).

Residues 10–13 and 37–38 each bind NADP(+); these read TGMV and RS. Arginine 108 contacts phosphate. The active-site Acyl-thioester intermediate is cysteine 147. Glutamine 174 is a substrate binding site. 177 to 178 contacts NADP(+); the sequence is SG. A substrate-binding site is contributed by glutamate 200. Residue lysine 203 coordinates phosphate. Residue arginine 233 participates in substrate binding. Residue histidine 240 is the Proton acceptor of the active site. The interval 276-299 is disordered; sequence APEKPVVVRDEENRPQPRMDRDMD. Basic and acidic residues predominate over residues 281–299; the sequence is VVVRDEENRPQPRMDRDMD. Position 327–328 (327–328) interacts with NADP(+); sequence NT.

Belongs to the aspartate-semialdehyde dehydrogenase family. In terms of assembly, homodimer.

It catalyses the reaction L-aspartate 4-semialdehyde + phosphate + NADP(+) = 4-phospho-L-aspartate + NADPH + H(+). It functions in the pathway amino-acid biosynthesis; L-lysine biosynthesis via DAP pathway; (S)-tetrahydrodipicolinate from L-aspartate: step 2/4. Its pathway is amino-acid biosynthesis; L-methionine biosynthesis via de novo pathway; L-homoserine from L-aspartate: step 2/3. It participates in amino-acid biosynthesis; L-threonine biosynthesis; L-threonine from L-aspartate: step 2/5. In terms of biological role, catalyzes the NADPH-dependent formation of L-aspartate-semialdehyde (L-ASA) by the reductive dephosphorylation of L-aspartyl-4-phosphate. In Methanothermobacter thermautotrophicus (strain ATCC 29096 / DSM 1053 / JCM 10044 / NBRC 100330 / Delta H) (Methanobacterium thermoautotrophicum), this protein is Aspartate-semialdehyde dehydrogenase.